The primary structure comprises 474 residues: ATP synthase subunit beta (474 aa).

151–158 contributes to the ATP binding site; the sequence is GGAGVGKT.

The protein belongs to the ATPase alpha/beta chains family. F-type ATPases have 2 components, CF(1) - the catalytic core - and CF(0) - the membrane proton channel. CF(1) has five subunits: alpha(3), beta(3), gamma(1), delta(1), epsilon(1). CF(0) has four main subunits: a(1), b(1), b'(1) and c(9-12).

Its subcellular location is the cell inner membrane. The enzyme catalyses ATP + H2O + 4 H(+)(in) = ADP + phosphate + 5 H(+)(out). Its function is as follows. Produces ATP from ADP in the presence of a proton gradient across the membrane. The catalytic sites are hosted primarily by the beta subunits. The sequence is that of ATP synthase subunit beta from Roseobacter denitrificans (strain ATCC 33942 / OCh 114) (Erythrobacter sp. (strain OCh 114)).